A 292-amino-acid polypeptide reads, in one-letter code: ATP synthase subunit a (292 aa).

The next 6 membrane-spanning stretches (helical) occupy residues I37–C57, F96–M116, V144–C164, P192–A212, L230–L250, and A263–I283.

The protein belongs to the ATPase A chain family. In terms of assembly, F-type ATPases have 2 components, CF(1) - the catalytic core - and CF(0) - the membrane proton channel. CF(1) has five subunits: alpha(3), beta(3), gamma(1), delta(1), epsilon(1). CF(0) has three main subunits: a(1), b(2) and c(9-12). The alpha and beta chains form an alternating ring which encloses part of the gamma chain. CF(1) is attached to CF(0) by a central stalk formed by the gamma and epsilon chains, while a peripheral stalk is formed by the delta and b chains.

It is found in the cell inner membrane. Its function is as follows. Key component of the proton channel; it plays a direct role in the translocation of protons across the membrane. This is ATP synthase subunit a from Paracidovorax citrulli (strain AAC00-1) (Acidovorax citrulli).